Here is a 305-residue protein sequence, read N- to C-terminus: Aspartate carbamoyltransferase catalytic subunit (305 aa).

Residues R56 and T57 each coordinate carbamoyl phosphate. K85 lines the L-aspartate pocket. Residues R106, H134, and Q137 each contribute to the carbamoyl phosphate site. L-aspartate contacts are provided by R167 and R227. 2 residues coordinate carbamoyl phosphate: L266 and P267.

The protein belongs to the aspartate/ornithine carbamoyltransferase superfamily. ATCase family. As to quaternary structure, heterooligomer of catalytic and regulatory chains.

It catalyses the reaction carbamoyl phosphate + L-aspartate = N-carbamoyl-L-aspartate + phosphate + H(+). The protein operates within pyrimidine metabolism; UMP biosynthesis via de novo pathway; (S)-dihydroorotate from bicarbonate: step 2/3. Its function is as follows. Catalyzes the condensation of carbamoyl phosphate and aspartate to form carbamoyl aspartate and inorganic phosphate, the committed step in the de novo pyrimidine nucleotide biosynthesis pathway. This Thermoplasma acidophilum (strain ATCC 25905 / DSM 1728 / JCM 9062 / NBRC 15155 / AMRC-C165) protein is Aspartate carbamoyltransferase catalytic subunit.